Reading from the N-terminus, the 1574-residue chain is Plexin-C1 (1574 aa).

The signal sequence occupies residues 1–34; sequence MEVSRRKTPPRPPYPAAPLPLIAYLLALAAPARG. A Sema domain is found at 35–452; sequence ADEPVWRSEQ…AGKEVRRIPV (418 aa). Topologically, residues 35-950 are extracellular; the sequence is ADEPVWRSEQ…YVEQESVPST (916 aa). Cys-64 and Cys-87 are joined by a disulfide. 3 N-linked (GlcNAc...) asparagine glycosylation sites follow: Asn-86, Asn-143, and Asn-149. A disulfide bond links Cys-156 and Cys-194. The N-linked (GlcNAc...) asparagine glycan is linked to Asn-252. Cys-283 and Cys-329 are oxidised to a cystine. N-linked (GlcNAc...) asparagine glycans are attached at residues Asn-386 and Asn-407. 4 disulfides stabilise this stretch: Cys-455-Cys-472, Cys-461-Cys-506, Cys-464-Cys-481, and Cys-475-Cys-487. Residues Asn-694, Asn-773, and Asn-802 are each glycosylated (N-linked (GlcNAc...) asparagine). The helical transmembrane segment at 951 to 971 threads the bilayer; the sequence is WYFLIALPILLAIVIVVAVVV. The Cytoplasmic segment spans residues 972 to 1574; that stretch reads TRYKSKELSR…FDEKKKCKWM (603 aa). Ser-984 bears the Phosphoserine mark.

Belongs to the plexin family. Monomer. Homodimer. Interacts with SEMA7A. In terms of tissue distribution, detected on dendritic cells, skin Langerhans cells and neutrophils (at protein level).

Its subcellular location is the membrane. In terms of biological role, receptor for SEMA7A, for vaccinia virus semaphorin A39R and for herpesvirus Sema protein. Binding of semaphorins triggers cellular responses leading to the rearrangement of the cytoskeleton and to secretion of IL6 and IL8. This is Plexin-C1 (Plxnc1) from Mus musculus (Mouse).